The primary structure comprises 553 residues: Chaperonin GroEL (553 aa).

ATP is bound by residues 30 to 33 (TLGP), lysine 51, 87 to 91 (DGTTT), glycine 415, and aspartate 495.

It belongs to the chaperonin (HSP60) family. Forms a cylinder of 14 subunits composed of two heptameric rings stacked back-to-back. Interacts with the co-chaperonin GroES.

It localises to the cytoplasm. It catalyses the reaction ATP + H2O + a folded polypeptide = ADP + phosphate + an unfolded polypeptide.. Its function is as follows. Together with its co-chaperonin GroES, plays an essential role in assisting protein folding. The GroEL-GroES system forms a nano-cage that allows encapsulation of the non-native substrate proteins and provides a physical environment optimized to promote and accelerate protein folding. The polypeptide is Chaperonin GroEL (Buchnera aphidicola subsp. Tuberolachnus salignus).